The following is a 432-amino-acid chain: UDP-N-acetylmuramate--L-alanine ligase (432 aa).

108 to 114 (GAHGKTS) provides a ligand contact to ATP.

The protein belongs to the MurCDEF family.

Its subcellular location is the cytoplasm. It carries out the reaction UDP-N-acetyl-alpha-D-muramate + L-alanine + ATP = UDP-N-acetyl-alpha-D-muramoyl-L-alanine + ADP + phosphate + H(+). Its pathway is cell wall biogenesis; peptidoglycan biosynthesis. Cell wall formation. This chain is UDP-N-acetylmuramate--L-alanine ligase, found in Bacillus licheniformis (strain ATCC 14580 / DSM 13 / JCM 2505 / CCUG 7422 / NBRC 12200 / NCIMB 9375 / NCTC 10341 / NRRL NRS-1264 / Gibson 46).